The sequence spans 403 residues: Sex hormone-binding globulin (403 aa).

Residues 1 to 30 (MEKGEVASLRCRLLLLLLLLTLPPTHQGRT) form the signal peptide. Laminin G-like domains follow at residues 46–218 (KYLS…LGNC) and 225–391 (GLFF…THSC). Cys-194 and Cys-218 are oxidised to a cystine. An N-linked (GlcNAc...) asparagine glycan is attached at Asn-274. A disulfide bridge connects residues Cys-363 and Cys-391. A glycan (N-linked (GlcNAc...) asparagine) is linked at Asn-397.

As to quaternary structure, homodimer. Isoform 2 is only expressed in the liver.

The protein resides in the secreted. In terms of biological role, functions as an androgen transport protein, but may also be involved in receptor mediated processes. Each dimer binds one molecule of steroid. Specific for 5-alpha-dihydrotestosterone, testosterone, and 17-beta-estradiol. Regulates the plasma metabolic clearance rate of steroid hormones by controlling their plasma concentration. The polypeptide is Sex hormone-binding globulin (Shbg) (Rattus norvegicus (Rat)).